Here is a 450-residue protein sequence, read N- to C-terminus: 23S rRNA (uracil(1939)-C(5))-methyltransferase RlmD (450 aa).

One can recognise a TRAM domain in the interval 1–62 (MPVAGPLEIV…PSYEQATLVD (62 aa)). The [4Fe-4S] cluster site is built by cysteine 75, cysteine 81, cysteine 84, and cysteine 163. Residues glutamine 271, phenylalanine 300, asparagine 305, glutamate 321, asparagine 349, and aspartate 370 each coordinate S-adenosyl-L-methionine. Cysteine 406 serves as the catalytic Nucleophile.

The protein belongs to the class I-like SAM-binding methyltransferase superfamily. RNA M5U methyltransferase family. RlmD subfamily.

It carries out the reaction uridine(1939) in 23S rRNA + S-adenosyl-L-methionine = 5-methyluridine(1939) in 23S rRNA + S-adenosyl-L-homocysteine + H(+). In terms of biological role, catalyzes the formation of 5-methyl-uridine at position 1939 (m5U1939) in 23S rRNA. This chain is 23S rRNA (uracil(1939)-C(5))-methyltransferase RlmD, found in Ralstonia nicotianae (strain ATCC BAA-1114 / GMI1000) (Ralstonia solanacearum).